The following is a 141-amino-acid chain: Large ribosomal subunit protein uL11 (141 aa).

Belongs to the universal ribosomal protein uL11 family. In terms of assembly, part of the ribosomal stalk of the 50S ribosomal subunit. Interacts with L10 and the large rRNA to form the base of the stalk. L10 forms an elongated spine to which L12 dimers bind in a sequential fashion forming a multimeric L10(L12)X complex. One or more lysine residues are methylated.

Forms part of the ribosomal stalk which helps the ribosome interact with GTP-bound translation factors. The chain is Large ribosomal subunit protein uL11 from Clostridium tetani (strain Massachusetts / E88).